The following is a 225-amino-acid chain: Probable GTP-binding protein EngB (225 aa).

The 185-residue stretch at 40–224 (GPPEVAFAGR…RAAIVHAVTA (185 aa)) folds into the EngB-type G domain. GTP-binding positions include 48-55 (GRSNVGKS), 75-79 (GRTQE), 102-105 (DMPG), 169-172 (TKAD), and 203-205 (TSS). 2 residues coordinate Mg(2+): serine 55 and threonine 77.

The protein belongs to the TRAFAC class TrmE-Era-EngA-EngB-Septin-like GTPase superfamily. EngB GTPase family. Mg(2+) serves as cofactor.

Functionally, necessary for normal cell division and for the maintenance of normal septation. The protein is Probable GTP-binding protein EngB of Chelativorans sp. (strain BNC1).